The following is a 323-amino-acid chain: NLIGLLTLLYAGTTWKILDKSFCFKYSKKNTRLVFIFIVKMLKQLSISAGNLLNKGTSETLRNEITTKKVSIHLPKHLKPANDSQFGHYLAGLIDGDGHFSSKQQLIIAFHSLDIQLAYYIKKQIGYGIVRKIKDKNAILFIIANSKGIERVITLINNKFRTTSKYNQIINNIFAHPRFKEFSKTITLGLNSNNNLNNHWLAGFSDADASFQIKILNRDKKIEVRLNYQIDQKKEYLLSLIKDNLGGNIGYRKSQDTYYYGSTSFGSAKKVINYFDNYHLLSSKYISYLKWRKAYLIIQENKHLTESGLSQIKKPHPYRKNIN.

The protein localises to the mitochondrion. This is an uncharacterized protein from Schizosaccharomyces pombe (strain 972 / ATCC 24843) (Fission yeast).